Reading from the N-terminus, the 171-residue chain is NADH-quinone oxidoreductase subunit I (171 aa).

4Fe-4S ferredoxin-type domains lie at L41–T71 and E81–D110. Residues C51, C54, C57, C61, C90, C93, C96, and C100 each coordinate [4Fe-4S] cluster.

The protein belongs to the complex I 23 kDa subunit family. In terms of assembly, NDH-1 is composed of 13 different subunits. Subunits NuoA, H, J, K, L, M, N constitute the membrane sector of the complex. The cofactor is [4Fe-4S] cluster.

It is found in the cell inner membrane. The catalysed reaction is a quinone + NADH + 5 H(+)(in) = a quinol + NAD(+) + 4 H(+)(out). NDH-1 shuttles electrons from NADH, via FMN and iron-sulfur (Fe-S) centers, to quinones in the respiratory chain. The immediate electron acceptor for the enzyme in this species is believed to be ubiquinone. Couples the redox reaction to proton translocation (for every two electrons transferred, four hydrogen ions are translocated across the cytoplasmic membrane), and thus conserves the redox energy in a proton gradient. This chain is NADH-quinone oxidoreductase subunit I, found in Shewanella woodyi (strain ATCC 51908 / MS32).